A 184-amino-acid chain; its full sequence is MTNSYALSPAIIAAVRPPASQDYLVAASLSGRKSINSSSSSIFVPISLSTSYGRSKCAFSISRKNPKSTIRCDIAVKSAASVDADADLSSSTSLETEEDEKAKEKIGARVRVTVPLKVYHVVRVPEVELMGMEGFIKDYVVLWKGKKISANLPFKVQFVKEIEGRGPVKFFTHLKEDEFELIDP.

Residues M1 to R71 constitute a chloroplast transit peptide.

Belongs to the ferredoxin thioredoxin reductase alpha subunit family. Heterodimer of subunit A (variable subunit) and subunit B (catalytic subunit). Heterodimeric FTR forms a complex with ferredoxin and thioredoxin.

It localises to the plastid. It is found in the chloroplast. Its function is as follows. Variable subunit of the ferredoxin-thioredoxin reductase (FTR), which catalyzes the two-electron reduction of thioredoxins by the electrons provided by reduced ferredoxin. The chain is Ferredoxin-thioredoxin reductase subunit A2, chloroplastic from Arabidopsis thaliana (Mouse-ear cress).